The chain runs to 409 residues: Serine/threonine transporter SstT (409 aa).

9 helical membrane-spanning segments follow: residues 14–34 (GNLI…GFIA), 57–77 (GALK…SIII), 89–109 (IIIL…VVSF), 149–169 (AISS…GIAL), 190–210 (IVKF…ATSV), 224–244 (LLLV…AAIV), 296–316 (ISIP…IAVL), 338–358 (IIAA…LMLI), and 365–385 (FGIS…IGVV).

The protein belongs to the dicarboxylate/amino acid:cation symporter (DAACS) (TC 2.A.23) family.

It localises to the cell inner membrane. It catalyses the reaction L-serine(in) + Na(+)(in) = L-serine(out) + Na(+)(out). It carries out the reaction L-threonine(in) + Na(+)(in) = L-threonine(out) + Na(+)(out). Involved in the import of serine and threonine into the cell, with the concomitant import of sodium (symport system). This chain is Serine/threonine transporter SstT, found in Campylobacter fetus subsp. fetus (strain 82-40).